The chain runs to 361 residues: UDP-N-acetylglucosamine--N-acetylmuramyl-(pentapeptide) pyrophosphoryl-undecaprenol N-acetylglucosamine transferase (361 aa).

Residues 21–23 (TGG), Asn-131, Arg-172, Ser-195, Ile-250, and Gln-295 each bind UDP-N-acetyl-alpha-D-glucosamine.

The protein belongs to the glycosyltransferase 28 family. MurG subfamily.

The protein resides in the cell inner membrane. It catalyses the reaction di-trans,octa-cis-undecaprenyl diphospho-N-acetyl-alpha-D-muramoyl-L-alanyl-D-glutamyl-meso-2,6-diaminopimeloyl-D-alanyl-D-alanine + UDP-N-acetyl-alpha-D-glucosamine = di-trans,octa-cis-undecaprenyl diphospho-[N-acetyl-alpha-D-glucosaminyl-(1-&gt;4)]-N-acetyl-alpha-D-muramoyl-L-alanyl-D-glutamyl-meso-2,6-diaminopimeloyl-D-alanyl-D-alanine + UDP + H(+). It participates in cell wall biogenesis; peptidoglycan biosynthesis. Functionally, cell wall formation. Catalyzes the transfer of a GlcNAc subunit on undecaprenyl-pyrophosphoryl-MurNAc-pentapeptide (lipid intermediate I) to form undecaprenyl-pyrophosphoryl-MurNAc-(pentapeptide)GlcNAc (lipid intermediate II). The protein is UDP-N-acetylglucosamine--N-acetylmuramyl-(pentapeptide) pyrophosphoryl-undecaprenol N-acetylglucosamine transferase of Solibacter usitatus (strain Ellin6076).